The chain runs to 433 residues: MANIQGGQQIGTNQGKGQSAADKLALFLKVFGGEVLTAFARTSVTMPRHMLRSIASGKSAQFPVIGRTKAAYLKPGENLDDKRKDIKHTEKVIHIDGLLTADVLIYDIEDAMNHYDVRAEYTAQLGESLAMAADGAVLAELAGLVNLPDGSNENIEGLGKPTVLTLVKPTTGSLTDPVELGKAIIAQLTIARASLTKNYVPAADRTFYTTPDNYSAILAALMPNAANYQALLDPERGTIRNVMGFEVVEVPHLTAGGAGDTREDAPADQKHAFPATSSTTVKVALDNVVGLFQHRSAVGTVKLKDLALERARRANYQADQIIAKYAMGHGGLRPEAAGAIVLPKGVGVIPDPTGVTLSQKTMTLVEGASRALTGTVQPSDANQSLSWSSSAEDVAVWEAGKVVAKGVGTADITATTSNGLIASCKVIVNAATS.

In terms of domain architecture, BIG2 spans 353–419; it reads TGVTLSQKTM…ADITATTSNG (67 aa).

This sequence belongs to the T7virus minor capsid protein family. In terms of assembly, interacts with the connector protein and the major capsid protein.

Its subcellular location is the virion. Its function is as follows. Assembles with the major capsid protein to form an icosahedral capsid with a T=7 symmetry, about 60 nm in diameter, and consisting of 415 capsid proteins. The major and minor capsid proteins are incorporated into the capsid in about a 90/10 ratio respectively. Once the capsid is formed, encapsidates one single copy of the viral genome. The sequence is that of Minor capsid protein (10) from Escherichia coli (Bacteriophage T3).